The sequence spans 454 residues: tRNA-2-methylthio-N(6)-dimethylallyladenosine synthase (454 aa).

The 117-residue stretch at arginine 6–serine 122 folds into the MTTase N-terminal domain. Residues cysteine 15, cysteine 51, cysteine 85, cysteine 157, cysteine 161, and cysteine 164 each contribute to the [4Fe-4S] cluster site. The Radical SAM core domain occupies arginine 143–arginine 384. The 65-residue stretch at glutamine 383 to serine 447 folds into the TRAM domain.

This sequence belongs to the methylthiotransferase family. MiaB subfamily. As to quaternary structure, monomer. The cofactor is [4Fe-4S] cluster.

Its subcellular location is the cytoplasm. It catalyses the reaction N(6)-dimethylallyladenosine(37) in tRNA + (sulfur carrier)-SH + AH2 + 2 S-adenosyl-L-methionine = 2-methylsulfanyl-N(6)-dimethylallyladenosine(37) in tRNA + (sulfur carrier)-H + 5'-deoxyadenosine + L-methionine + A + S-adenosyl-L-homocysteine + 2 H(+). Catalyzes the methylthiolation of N6-(dimethylallyl)adenosine (i(6)A), leading to the formation of 2-methylthio-N6-(dimethylallyl)adenosine (ms(2)i(6)A) at position 37 in tRNAs that read codons beginning with uridine. This chain is tRNA-2-methylthio-N(6)-dimethylallyladenosine synthase, found in Acaryochloris marina (strain MBIC 11017).